The primary structure comprises 471 residues: Siroheme synthase 1 (471 aa).

A precorrin-2 dehydrogenase /sirohydrochlorin ferrochelatase region spans residues 1-203; the sequence is MEYLPLFAQL…GDTRAAEAVL (203 aa). Residues 22 to 23 and 43 to 44 each bind NAD(+); these read EV and KK. Ser128 carries the post-translational modification Phosphoserine. A uroporphyrinogen-III C-methyltransferase region spans residues 215–471; that stretch reads GEIILVGAGP…NLRSSVVNLA (257 aa). Pro224 is a binding site for S-adenosyl-L-methionine. The active-site Proton acceptor is the Asp247. Lys269 (proton donor) is an active-site residue. S-adenosyl-L-methionine-binding positions include 300-302, Ile305, 330-331, Met382, and Gly411; these read GGD and TA.

It in the N-terminal section; belongs to the precorrin-2 dehydrogenase / sirohydrochlorin ferrochelatase family. In the C-terminal section; belongs to the precorrin methyltransferase family.

The enzyme catalyses uroporphyrinogen III + 2 S-adenosyl-L-methionine = precorrin-2 + 2 S-adenosyl-L-homocysteine + H(+). It catalyses the reaction precorrin-2 + NAD(+) = sirohydrochlorin + NADH + 2 H(+). It carries out the reaction siroheme + 2 H(+) = sirohydrochlorin + Fe(2+). Its pathway is cofactor biosynthesis; adenosylcobalamin biosynthesis; precorrin-2 from uroporphyrinogen III: step 1/1. The protein operates within cofactor biosynthesis; adenosylcobalamin biosynthesis; sirohydrochlorin from precorrin-2: step 1/1. It functions in the pathway porphyrin-containing compound metabolism; siroheme biosynthesis; precorrin-2 from uroporphyrinogen III: step 1/1. It participates in porphyrin-containing compound metabolism; siroheme biosynthesis; siroheme from sirohydrochlorin: step 1/1. Its pathway is porphyrin-containing compound metabolism; siroheme biosynthesis; sirohydrochlorin from precorrin-2: step 1/1. Multifunctional enzyme that catalyzes the SAM-dependent methylations of uroporphyrinogen III at position C-2 and C-7 to form precorrin-2 via precorrin-1. Then it catalyzes the NAD-dependent ring dehydrogenation of precorrin-2 to yield sirohydrochlorin. Finally, it catalyzes the ferrochelation of sirohydrochlorin to yield siroheme. This chain is Siroheme synthase 1, found in Cronobacter sakazakii (strain ATCC BAA-894) (Enterobacter sakazakii).